A 512-amino-acid polypeptide reads, in one-letter code: Putative ribose/galactose/methyl galactoside import ATP-binding protein 1 (512 aa).

2 consecutive ABC transporter domains span residues Ile14–Gln251 and Thr262–Glu507. Gly46 to Ser53 provides a ligand contact to ATP.

The protein belongs to the ABC transporter superfamily. Carbohydrate importer 2 (CUT2) (TC 3.A.1.2) family.

The protein resides in the cell inner membrane. It catalyses the reaction D-ribose(out) + ATP + H2O = D-ribose(in) + ADP + phosphate + H(+). It carries out the reaction D-galactose(out) + ATP + H2O = D-galactose(in) + ADP + phosphate + H(+). Functionally, part of an ABC transporter complex involved in carbohydrate import. Could be involved in ribose, galactose and/or methyl galactoside import. Responsible for energy coupling to the transport system. This chain is Putative ribose/galactose/methyl galactoside import ATP-binding protein 1, found in Burkholderia lata (strain ATCC 17760 / DSM 23089 / LMG 22485 / NCIMB 9086 / R18194 / 383).